The primary structure comprises 342 residues: Dihydroorotase (342 aa).

Zn(2+) is bound by residues histidine 13 and histidine 15. Substrate-binding positions include 15-17 (HLR) and asparagine 41. 3 residues coordinate Zn(2+): lysine 98, histidine 135, and histidine 173. Lysine 98 bears the N6-carboxylysine mark. Position 135 (histidine 135) interacts with substrate. Leucine 218 contributes to the substrate binding site. A Zn(2+)-binding site is contributed by aspartate 246. Aspartate 246 is an active-site residue. Residues histidine 250 and alanine 262 each coordinate substrate.

This sequence belongs to the metallo-dependent hydrolases superfamily. DHOase family. Class II DHOase subfamily. As to quaternary structure, homodimer. Requires Zn(2+) as cofactor.

The catalysed reaction is (S)-dihydroorotate + H2O = N-carbamoyl-L-aspartate + H(+). It participates in pyrimidine metabolism; UMP biosynthesis via de novo pathway; (S)-dihydroorotate from bicarbonate: step 3/3. Its function is as follows. Catalyzes the reversible cyclization of carbamoyl aspartate to dihydroorotate. This Aliivibrio fischeri (strain MJ11) (Vibrio fischeri) protein is Dihydroorotase.